Here is a 242-residue protein sequence, read N- to C-terminus: Protein odd-skipped-related 1 (242 aa).

3 consecutive C2H2-type zinc fingers follow at residues Phe-128–His-150, Phe-156–His-178, and His-184–His-207.

The protein belongs to the Odd C2H2-type zinc-finger protein family.

Its subcellular location is the nucleus. Functionally, may function as transcription regulator. Essential for larval development. Required for morphogenesis and function of the digestive tract. This is Protein odd-skipped-related 1 from Caenorhabditis elegans.